The following is a 346-amino-acid chain: MRLLFLAVLRPHTGNAVTAQRVRAHLEAAGHVCVLKDAFDFESRSEIANLILAENCEAALALHLYRGGRLLQGHRIPFGVIFGGTDVNEDANQAEKNTVMGRVLEEARFAVAFTESMKEMAQAQWPHAKGKVYVQSQGIATTPNAAFNWNTFLQRSEINQSADNLHIFLLICGLRQVKDPLYLVDAFSAWHQEEPNVHLVIVGPEVDPVFTREVKAKVKRAAGVRLIGEMPQEDLHAVVKNCFAVVNSSVSEGMSAAILEAMDLEVPVLARNIPGNAAVVKHEVTGLLFSNPQEFVHLAKRLVSDPALEKEIVVNGREYVRMYHSWQVERDTYQQLIRKLEGSTED.

A signal peptide spans 1–16; it reads MRLLFLAVLRPHTGNA.

Belongs to the glycosyltransferase group 1 family. Glycosyltransferase 4 subfamily.

It is found in the secreted. This is Glycosyltransferase 1 domain-containing protein 1 (GLT1D1) from Homo sapiens (Human).